Here is a 261-residue protein sequence, read N- to C-terminus: Indole-3-glycerol phosphate synthase (261 aa).

It belongs to the TrpC family.

It carries out the reaction 1-(2-carboxyphenylamino)-1-deoxy-D-ribulose 5-phosphate + H(+) = (1S,2R)-1-C-(indol-3-yl)glycerol 3-phosphate + CO2 + H2O. It participates in amino-acid biosynthesis; L-tryptophan biosynthesis; L-tryptophan from chorismate: step 4/5. The protein is Indole-3-glycerol phosphate synthase of Campylobacter concisus (strain 13826).